A 354-amino-acid chain; its full sequence is Chorismate synthase (354 aa).

Position 46 (Arg46) interacts with NADP(+). Residues 123–125 (RVS), 233–234 (NG), Gly273, 288–292 (KPTPS), and Arg314 each bind FMN.

The protein belongs to the chorismate synthase family. Homotetramer. The cofactor is FMNH2.

The enzyme catalyses 5-O-(1-carboxyvinyl)-3-phosphoshikimate = chorismate + phosphate. It participates in metabolic intermediate biosynthesis; chorismate biosynthesis; chorismate from D-erythrose 4-phosphate and phosphoenolpyruvate: step 7/7. Functionally, catalyzes the anti-1,4-elimination of the C-3 phosphate and the C-6 proR hydrogen from 5-enolpyruvylshikimate-3-phosphate (EPSP) to yield chorismate, which is the branch point compound that serves as the starting substrate for the three terminal pathways of aromatic amino acid biosynthesis. This reaction introduces a second double bond into the aromatic ring system. The polypeptide is Chorismate synthase (Campylobacter curvus (strain 525.92)).